We begin with the raw amino-acid sequence, 329 residues long: GTPase Obg (329 aa).

The Obg domain maps to 1 to 159; sequence MQFIDQAIID…WSLQLELKLL (159 aa). Positions 160–328 constitute an OBG-type G domain; the sequence is AEVGIIGLPN…LLSSIWYELG (169 aa). Residues 166–173, 191–195, 213–216, 280–283, and 309–311 each bind ATP; these read GLPNAGKS, FTTLI, DIPG, NKKE, and SAV. Mg(2+)-binding residues include Ser-173 and Thr-193.

The protein belongs to the TRAFAC class OBG-HflX-like GTPase superfamily. OBG GTPase family. In terms of assembly, monomer. It depends on Mg(2+) as a cofactor.

The protein localises to the cytoplasm. An essential GTPase which binds GTP, GDP and possibly (p)ppGpp with moderate affinity, with high nucleotide exchange rates and a fairly low GTP hydrolysis rate. Plays a role in control of the cell cycle, stress response, ribosome biogenesis and in those bacteria that undergo differentiation, in morphogenesis control. The protein is GTPase Obg of Prochlorococcus marinus (strain NATL1A).